A 509-amino-acid chain; its full sequence is Surface lipoprotein assembly modifier (509 aa).

The N-terminal stretch at 1-32 (MNLMINLKPLTFLPFFGRLVFLSGVIYNTAWA) is a signal peptide. The interval 33–204 (NTVIPVDNSR…SYIDTINQRD (172 aa)) is N-terminal domain. A disordered region spans residues 43–72 (PDETFSQTSPKQHLFSQKPKPTEPTSSASS). Residues 46 to 57 (TFSQTSPKQHLF) are compositionally biased toward polar residues. One copy of the TPR repeat lies at 120–153 (FLLKWAQAVVARKQGKLNESVRLYRQIIAEKPNL). The segment at 205–509 (SWNVYGGVNY…RIYLTFSKTF (305 aa)) is C-terminal probable beta barrel. Beta stranded transmembrane passes span 206 to 216 (WNVYGGVNYLH), 245 to 256 (LSYFINLSKNWS), 261 to 270 (FFTEFSADIN), 284 to 294 (STRLNLGGGYR), 298 to 308 (TEVKLMPFVEQ), 331 to 341 (SGINLDVDYWL), 345 to 355 (WKISTVLEYTE), 371 to 381 (YSISNTLIYMP), 386 to 395 (FWFVGLDYYQ), 408 to 417 (QGIRLGWGQE), 423 to 432 (STRLQTSYAT), 461 to 470 (GVNFTIWHRS), 476 to 485 (ITPKITWAYQ), and 499 to 509 (NRIYLTFSKTF).

Belongs to the Slam family.

Its subcellular location is the cell outer membrane. Its function is as follows. Required for correct export to the cell surface of some cell outer membrane lipoproteins (tested with PM1514) upon heterologous expression in E.coli and probably also in Pasteurella. The chain is Surface lipoprotein assembly modifier from Pasteurella multocida (strain Pm70).